The primary structure comprises 192 residues: Large ribosomal subunit protein uL3 (192 aa).

The protein belongs to the universal ribosomal protein uL3 family. In terms of assembly, part of the 50S ribosomal subunit. Forms a cluster with proteins L14 and L19.

Functionally, one of the primary rRNA binding proteins, it binds directly near the 3'-end of the 23S rRNA, where it nucleates assembly of the 50S subunit. This chain is Large ribosomal subunit protein uL3 (rplC), found in Helicobacter hepaticus (strain ATCC 51449 / 3B1).